The primary structure comprises 185 residues: Ribosome-recycling factor (185 aa).

The protein belongs to the RRF family.

The protein resides in the cytoplasm. Functionally, responsible for the release of ribosomes from messenger RNA at the termination of protein biosynthesis. May increase the efficiency of translation by recycling ribosomes from one round of translation to another. The polypeptide is Ribosome-recycling factor (Clostridium novyi (strain NT)).